A 353-amino-acid chain; its full sequence is DNA-directed RNA polymerase subunit alpha (353 aa).

An alpha N-terminal domain (alpha-NTD) region spans residues 1 to 245 (MEKIQKITYK…AHFQIIGNIN (245 aa)). An alpha C-terminal domain (alpha-CTD) region spans residues 261 to 353 (EREIKSTTPI…QLNNSEEGEE (93 aa)).

Belongs to the RNA polymerase alpha chain family. As to quaternary structure, homodimer. The RNAP catalytic core consists of 2 alpha, 1 beta, 1 beta' and 1 omega subunit. When a sigma factor is associated with the core the holoenzyme is formed, which can initiate transcription.

The catalysed reaction is RNA(n) + a ribonucleoside 5'-triphosphate = RNA(n+1) + diphosphate. DNA-dependent RNA polymerase catalyzes the transcription of DNA into RNA using the four ribonucleoside triphosphates as substrates. The protein is DNA-directed RNA polymerase subunit alpha of Mycoplasma sp.